Consider the following 93-residue polypeptide: Small ribosomal subunit protein uS19 (93 aa).

It belongs to the universal ribosomal protein uS19 family.

Protein S19 forms a complex with S13 that binds strongly to the 16S ribosomal RNA. This is Small ribosomal subunit protein uS19 from Clostridioides difficile (strain 630) (Peptoclostridium difficile).